An 823-amino-acid chain; its full sequence is Protein phosphatase 1 regulatory subunit 29 (823 aa).

Positions 1-22 (MLRLGLCAAALLCVCQPGAVRA) are cleaved as a signal peptide. Residues 23-397 (DCWLIEGDKG…APSTSTTTHY (375 aa)) are Extracellular-facing. A glycan (N-linked (GlcNAc...) asparagine) is linked at Asn54. LRR repeat units follow at residues 56–77 (TVHDLRLNENKLKAVLYSSLNR), 80–101 (NLTDLNLTKNEISYIEDGAFLG), 104–125 (SLQVLQLGYNRLSNLTEGMLRG), 128–149 (RLQFLFVQHNLIEVVTPTAFSE), and 152–173 (SLISIDLSSNRLSRLDGATFAS). Asn80, Asn85, and Asn117 each carry an N-linked (GlcNAc...) asparagine glycan. The region spanning 185–247 (NPFNCECDLF…ITVLQAKCRN (63 aa)) is the LRRCT domain. N-linked (GlcNAc...) asparagine glycosylation is found at Asn205 and Asn247. Residues 249 to 294 (SMPARPVSHPTPYSTDAQREPDENSGFNPDEILSVEPPASSTTDAS) form a disordered region. Residues 292–379 (DASAGPAIKL…FNHTCLTFTT (88 aa)) form the Fibronectin type-III domain. Residues 398-418 (IMTILGCLFGMVIVLGAVYYC) form a helical membrane-spanning segment. At 419 to 823 (LRKRRMQEEK…WKGVSAQQKL (405 aa)) the chain is on the cytoplasmic side. The interval 590-624 (ASSAATPGALERPSFLSPPYKESSHHPLQRQLSAD) is disordered. 3 positions are modified to phosphoserine: Ser622, Ser671, and Ser675.

Interacts with PPP1CA.

Its subcellular location is the membrane. Its function is as follows. Inhibits phosphatase activity of protein phosphatase 1 (PP1) complexes. The protein is Protein phosphatase 1 regulatory subunit 29 (Elfn2) of Mus musculus (Mouse).